The primary structure comprises 92 residues: Small ribosomal subunit protein bS20 (92 aa).

Residues 1 to 23 are disordered; that stretch reads MANTTSAKKATRKIARRTDVNKA.

It belongs to the bacterial ribosomal protein bS20 family.

Binds directly to 16S ribosomal RNA. The chain is Small ribosomal subunit protein bS20 from Rhizobium leguminosarum bv. trifolii (strain WSM2304).